A 424-amino-acid chain; its full sequence is Probable ribonuclease FAU-1 (424 aa).

Belongs to the FAU-1 family.

In terms of biological role, probable RNase involved in rRNA stability through maturation and/or degradation of precursor rRNAs. Binds to RNA in loop regions with AU-rich sequences. This chain is Probable ribonuclease FAU-1, found in Saccharolobus solfataricus (strain ATCC 35092 / DSM 1617 / JCM 11322 / P2) (Sulfolobus solfataricus).